We begin with the raw amino-acid sequence, 84 residues long: Putative defensin-like protein 63 (84 aa).

An N-terminal signal peptide occupies residues M1 to S21. Disulfide bonds link C40/C81, C44/C67, C53/C79, and C57/C80.

It belongs to the DEFL family.

The protein localises to the secreted. The protein is Putative defensin-like protein 63 of Arabidopsis thaliana (Mouse-ear cress).